The chain runs to 210 residues: Protein GrpE (210 aa).

The disordered stretch occupies residues 1 to 42; it reads MANEERTIPETNVASERPEDPVESQTRAEGGEQIQEAAPETA.

Belongs to the GrpE family. As to quaternary structure, homodimer.

The protein localises to the cytoplasm. Its function is as follows. Participates actively in the response to hyperosmotic and heat shock by preventing the aggregation of stress-denatured proteins, in association with DnaK and GrpE. It is the nucleotide exchange factor for DnaK and may function as a thermosensor. Unfolded proteins bind initially to DnaJ; upon interaction with the DnaJ-bound protein, DnaK hydrolyzes its bound ATP, resulting in the formation of a stable complex. GrpE releases ADP from DnaK; ATP binding to DnaK triggers the release of the substrate protein, thus completing the reaction cycle. Several rounds of ATP-dependent interactions between DnaJ, DnaK and GrpE are required for fully efficient folding. The protein is Protein GrpE of Nitrosococcus oceani (strain ATCC 19707 / BCRC 17464 / JCM 30415 / NCIMB 11848 / C-107).